The sequence spans 264 residues: Ribosomal RNA small subunit methyltransferase A (264 aa).

N15, I17, G42, E64, D90, and N109 together coordinate S-adenosyl-L-methionine.

This sequence belongs to the class I-like SAM-binding methyltransferase superfamily. rRNA adenine N(6)-methyltransferase family. RsmA subfamily.

The protein resides in the cytoplasm. It catalyses the reaction adenosine(1518)/adenosine(1519) in 16S rRNA + 4 S-adenosyl-L-methionine = N(6)-dimethyladenosine(1518)/N(6)-dimethyladenosine(1519) in 16S rRNA + 4 S-adenosyl-L-homocysteine + 4 H(+). In terms of biological role, specifically dimethylates two adjacent adenosines (A1518 and A1519) in the loop of a conserved hairpin near the 3'-end of 16S rRNA in the 30S particle. May play a critical role in biogenesis of 30S subunits. This chain is Ribosomal RNA small subunit methyltransferase A, found in Wolbachia pipientis subsp. Culex pipiens (strain wPip).